We begin with the raw amino-acid sequence, 856 residues long: Rod cGMP-specific 3',5'-cyclic phosphodiesterase subunit beta (856 aa).

Ser-2 is subject to N-acetylserine. GAF domains are found at residues 71–220 (NMER…TLNL) and 252–429 (DIER…GWSV). Residues 481 to 814 (EEDELGKILK…KEWKALADEY (334 aa)) enclose the PDEase domain. His-557 functions as the Proton donor in the catalytic mechanism. His-561, His-597, Asp-598, and Asp-718 together coordinate a divalent metal cation. Cys-853 carries the S-geranylgeranyl cysteine lipid modification. A propeptide spans 854–856 (CIL) (removed in mature form).

Belongs to the cyclic nucleotide phosphodiesterase family. In terms of assembly, oligomer composed of two catalytic chains (alpha and beta), an inhibitory chain (gamma) and the delta chain. The cofactor is a divalent metal cation.

The protein localises to the membrane. It is found in the cell projection. The protein resides in the cilium. Its subcellular location is the photoreceptor outer segment. It carries out the reaction 3',5'-cyclic GMP + H2O = GMP + H(+). Its function is as follows. Rod-specific cGMP phosphodiesterase that catalyzes the hydrolysis of 3',5'-cyclic GMP. Necessary for the formation of a functional phosphodiesterase holoenzyme. Involved in retinal circadian rhythm photoentrainment via modulation of UVA and orange light-induced phase-shift of the retina clock. May participate in processes of transmission and amplification of the visual signal. The polypeptide is Rod cGMP-specific 3',5'-cyclic phosphodiesterase subunit beta (Mus musculus (Mouse)).